Reading from the N-terminus, the 135-residue chain is Holo-[acyl-carrier-protein] synthase (135 aa).

The Mg(2+) site is built by Asp-9 and Glu-63.

This sequence belongs to the P-Pant transferase superfamily. AcpS family. Requires Mg(2+) as cofactor.

It localises to the cytoplasm. The catalysed reaction is apo-[ACP] + CoA = holo-[ACP] + adenosine 3',5'-bisphosphate + H(+). Functionally, transfers the 4'-phosphopantetheine moiety from coenzyme A to a Ser of acyl-carrier-protein. The chain is Holo-[acyl-carrier-protein] synthase from Paraburkholderia phymatum (strain DSM 17167 / CIP 108236 / LMG 21445 / STM815) (Burkholderia phymatum).